A 295-amino-acid polypeptide reads, in one-letter code: Porphobilinogen deaminase (295 aa).

S-(dipyrrolylmethanemethyl)cysteine is present on C241.

It belongs to the HMBS family. In terms of assembly, monomer. Dipyrromethane is required as a cofactor.

It carries out the reaction 4 porphobilinogen + H2O = hydroxymethylbilane + 4 NH4(+). It participates in porphyrin-containing compound metabolism; protoporphyrin-IX biosynthesis; coproporphyrinogen-III from 5-aminolevulinate: step 2/4. In terms of biological role, tetrapolymerization of the monopyrrole PBG into the hydroxymethylbilane pre-uroporphyrinogen in several discrete steps. This Lachnospira eligens (strain ATCC 27750 / DSM 3376 / VPI C15-48 / C15-B4) (Eubacterium eligens) protein is Porphobilinogen deaminase.